We begin with the raw amino-acid sequence, 178 residues long: Large ribosomal subunit protein uL6 (178 aa).

This sequence belongs to the universal ribosomal protein uL6 family. As to quaternary structure, part of the 50S ribosomal subunit.

Its function is as follows. This protein binds to the 23S rRNA, and is important in its secondary structure. It is located near the subunit interface in the base of the L7/L12 stalk, and near the tRNA binding site of the peptidyltransferase center. In Streptococcus pneumoniae (strain JJA), this protein is Large ribosomal subunit protein uL6.